The sequence spans 151 residues: Transcriptional repressor NrdR (151 aa).

Positions 1–21 (MRCPFCGEADTQVKDSRPTED) are disordered. A zinc finger lies at 3–34 (CPFCGEADTQVKDSRPTEDGAAIRRRRFCPQC). A compositionally biased stretch (basic and acidic residues) spans 11–21 (TQVKDSRPTED). In terms of domain architecture, ATP-cone spans 49–139 (LVVVKADQRR…VYRDFREAKD (91 aa)).

This sequence belongs to the NrdR family. It depends on Zn(2+) as a cofactor.

Negatively regulates transcription of bacterial ribonucleotide reductase nrd genes and operons by binding to NrdR-boxes. This Acidiphilium cryptum (strain JF-5) protein is Transcriptional repressor NrdR.